The primary structure comprises 450 residues: Glutamyl-tRNA(Gln) amidotransferase subunit A, mitochondrial (450 aa).

Catalysis depends on charge relay system residues K47 and S122. The active-site Acyl-ester intermediate is S146.

It belongs to the amidase family. GatA subfamily. In terms of assembly, subunit of the heterotrimeric GatFAB amidotransferase (AdT) complex, composed of A, B and F subunits.

Its subcellular location is the mitochondrion. It carries out the reaction L-glutamyl-tRNA(Gln) + L-glutamine + ATP + H2O = L-glutaminyl-tRNA(Gln) + L-glutamate + ADP + phosphate + H(+). Allows the formation of correctly charged Gln-tRNA(Gln) through the transamidation of misacylated Glu-tRNA(Gln) in the mitochondria. The reaction takes place in the presence of glutamine and ATP through an activated gamma-phospho-Glu-tRNA(Gln). This chain is Glutamyl-tRNA(Gln) amidotransferase subunit A, mitochondrial, found in Candida albicans (strain SC5314 / ATCC MYA-2876) (Yeast).